The following is a 499-amino-acid chain: Aspartyl/glutamyl-tRNA(Asn/Gln) amidotransferase subunit B (499 aa).

This sequence belongs to the GatB/GatE family. GatB subfamily. In terms of assembly, heterotrimer of A, B and C subunits.

The enzyme catalyses L-glutamyl-tRNA(Gln) + L-glutamine + ATP + H2O = L-glutaminyl-tRNA(Gln) + L-glutamate + ADP + phosphate + H(+). It carries out the reaction L-aspartyl-tRNA(Asn) + L-glutamine + ATP + H2O = L-asparaginyl-tRNA(Asn) + L-glutamate + ADP + phosphate + 2 H(+). In terms of biological role, allows the formation of correctly charged Asn-tRNA(Asn) or Gln-tRNA(Gln) through the transamidation of misacylated Asp-tRNA(Asn) or Glu-tRNA(Gln) in organisms which lack either or both of asparaginyl-tRNA or glutaminyl-tRNA synthetases. The reaction takes place in the presence of glutamine and ATP through an activated phospho-Asp-tRNA(Asn) or phospho-Glu-tRNA(Gln). This chain is Aspartyl/glutamyl-tRNA(Asn/Gln) amidotransferase subunit B, found in Bifidobacterium longum (strain DJO10A).